The sequence spans 305 residues: Glutaminase (305 aa).

Substrate-binding residues include S61, N113, E158, N165, Y189, Y241, and V259.

The protein belongs to the glutaminase family. Homotetramer.

It carries out the reaction L-glutamine + H2O = L-glutamate + NH4(+). This chain is Glutaminase, found in Clostridium botulinum (strain ATCC 19397 / Type A).